The sequence spans 627 residues: Phosphomethylpyrimidine synthase (627 aa).

A compositionally biased stretch (polar residues) spans 1 to 24 (MSATQKNNITRLEQLDRQSTQPFP). The segment at 1–29 (MSATQKNNITRLEQLDRQSTQPFPNSRKV) is disordered. Substrate-binding positions include N231, M260, Y289, H325, 345–347 (SRG), 386–389 (DGLR), and E425. H429 provides a ligand contact to Zn(2+). Y452 serves as a coordination point for substrate. Position 493 (H493) interacts with Zn(2+). C573, C576, and C581 together coordinate [4Fe-4S] cluster.

Belongs to the ThiC family. In terms of assembly, homodimer. The cofactor is [4Fe-4S] cluster.

The catalysed reaction is 5-amino-1-(5-phospho-beta-D-ribosyl)imidazole + S-adenosyl-L-methionine = 4-amino-2-methyl-5-(phosphooxymethyl)pyrimidine + CO + 5'-deoxyadenosine + formate + L-methionine + 3 H(+). It participates in cofactor biosynthesis; thiamine diphosphate biosynthesis. Functionally, catalyzes the synthesis of the hydroxymethylpyrimidine phosphate (HMP-P) moiety of thiamine from aminoimidazole ribotide (AIR) in a radical S-adenosyl-L-methionine (SAM)-dependent reaction. The sequence is that of Phosphomethylpyrimidine synthase from Pseudomonas aeruginosa (strain LESB58).